The following is a 299-amino-acid chain: Non-structural protein V (299 aa).

A disordered region spans residues serine 40–glutamate 91. Residues histidine 110–valine 120 form an interaction with host STAT1 region. The interval serine 133–tyrosine 163 is disordered. Over residues glycine 144–threonine 160 the composition is skewed to acidic residues. Zn(2+) is bound by residues histidine 232, cysteine 251, cysteine 255, cysteine 267, cysteine 269, cysteine 272, cysteine 276, and cysteine 279.

The protein belongs to the paramyxoviruses V protein family. As to quaternary structure, interacts with host IFIH1/MDA5 and DHX58/LGP2; these interactions are involved in the inhibition of the host type I interferon signaling pathway. Interacts with host TYK2; this interaction inhibits the type I interferon signaling pathway without affecting the type II pathway. Interacts with host IRF7; this interaction inhibits IRF7 translocation to the nucleus. Interacts with host CHUK. Interacts with host RELA/p65; this interaction inhibits the nuclear translocation of NF-KappaB. Interacts (via N-terminus) with host STAT1 and JAK1; these interactions inhibit STAT1 phosphorylation by Jak1 and thereby the type I interferon signaling pathway. Interacts (via C-terminus) with host STAT2; this interaction is involved in the inhibition of the host type I interferon signaling pathway. Forms a complex with host PPP1CA and PPP1CC; this interaction prevents dephosphorylation of host IFIH1/MDA5 and leads to the inhibition of the host type I interferon signaling pathway. Interacts with host IRF9; this interaction prevents the binding of IRF9 to STAT2 and thereby the type I interferon signaling pathway. Interacts with host RIGI regulatory protein (via CARDs domain) and host TRIM25 (via SPRY domain); these interactions prevent TRIM25-mediated ubiquitination of RIG-I and disrupts downstream RIG-I signaling.

It localises to the host cytoplasm. Plays an essential role in the inhibition of host immune response. Prevents the establishment of cellular antiviral state by blocking interferon-alpha/beta (IFN-alpha/beta) production and signaling pathway. Interacts with host IFIH1/MDA5 and DHX58/LGP2 to inhibit the transduction pathway involved in the activation of IFN-beta promoter, thus protecting the virus against cell antiviral state. Blocks the type I interferon signaling pathway by interacting with host TYK2 and thereby inhibiting downstream STAT1 and STAT2 phosphorylation. Blocks the type I interferon signaling pathway by disrupting the RIG-I signaling pathway. Moderately affects the type II interferon signaling. Prevents PP1alpha/gamma-mediated dephosphorylation of host IFIH1/MDA5 and thus blocks its activation. The sequence is that of Non-structural protein V (P/V) from Homo sapiens (Human).